A 372-amino-acid chain; its full sequence is Tyrosine--tRNA ligase (372 aa).

Residues Y37, Y169, Q173, D176, and Q191 each contribute to the L-tyrosine site. Positions 246-250 match the 'KMSKS' region motif; that stretch reads KMSKS. An ATP-binding site is contributed by K249.

Belongs to the class-I aminoacyl-tRNA synthetase family. TyrS type 4 subfamily. In terms of assembly, homodimer.

The protein localises to the cytoplasm. The catalysed reaction is tRNA(Tyr) + L-tyrosine + ATP = L-tyrosyl-tRNA(Tyr) + AMP + diphosphate + H(+). Functionally, catalyzes the attachment of tyrosine to tRNA(Tyr) in a two-step reaction: tyrosine is first activated by ATP to form Tyr-AMP and then transferred to the acceptor end of tRNA(Tyr). The polypeptide is Tyrosine--tRNA ligase (Pyrobaculum arsenaticum (strain DSM 13514 / JCM 11321 / PZ6)).